Consider the following 432-residue polypeptide: MMRNVWKSGLRRSAWIGLLMVLCVGVARAQLYVEIAGAGSSQYPIAIANFQGESQIPQDITAIVRADLVHSGRFSNVDVAGAVVPDSPAPDLGAWKSRGAAAFVGGTVTRNGDRYEIRFRLYDTAKGESLGGLALTRGEGQLRLAAHEIADYIYQKLIGDRGVFATRLSYVSKVGRRYQLQISDSDGANPQVALTSNEPIISPAWSPDGTKVAYVSFESRKPVVYVHDLISGRRAVISNQKGNNSAPAWSPDGRRVAVALSRDGNTQIYQVNADGSGLRRLTRSSAIDTEPSFSPDGRSIYFTSDRGGAPQIYRMPTEGEDAGSAQRVTFKGGYNTSPRVSPDGKLLAYISRVGGAFKLYVQDLSNGDVTGLTDTSYDESPSFAANGKFILYATRVGGRSVLAAVSTDGRTRQILSLQAGTVREPAWGPFMQ.

A signal peptide spans 1-29 (MMRNVWKSGLRRSAWIGLLMVLCVGVARA).

Belongs to the TolB family. The Tol-Pal system is composed of five core proteins: the inner membrane proteins TolA, TolQ and TolR, the periplasmic protein TolB and the outer membrane protein Pal. They form a network linking the inner and outer membranes and the peptidoglycan layer.

Its subcellular location is the periplasm. Part of the Tol-Pal system, which plays a role in outer membrane invagination during cell division and is important for maintaining outer membrane integrity. This Ralstonia nicotianae (strain ATCC BAA-1114 / GMI1000) (Ralstonia solanacearum) protein is Tol-Pal system protein TolB.